Consider the following 599-residue polypeptide: Kelch-like protein 41a (599 aa).

The 71-residue stretch at 32 to 102 folds into the BTB domain; it reads VDCILKVGDR…LYSADIDITD (71 aa). In terms of domain architecture, BACK spans 137–239; sequence CLAIFRMGLV…PEKYLKEKVE (103 aa). 5 Kelch repeats span residues 339–391, 393–440, 441–488, 489–535, and 537–591; these read LLYV…EFEN, LFAV…SQNG, LVYC…VHKG, KIVV…SVDG, and LYAV…SMRL.

It localises to the cytoplasm. Its subcellular location is the cytoskeleton. The protein resides in the sarcoplasmic reticulum membrane. The protein localises to the endoplasmic reticulum membrane. In terms of biological role, involved in skeletal muscle development and differentiation. In Danio rerio (Zebrafish), this protein is Kelch-like protein 41a (klhl41a).